The primary structure comprises 455 residues: Serine incorporator 2 (455 aa).

The next 11 helical transmembrane spans lie at 5–27, 40–57, 96–118, 131–150, 160–182, 202–224, 239–256, 268–290, 317–339, 385–407, and 422–444; these read LGAC…ILCS, LIFT…IIML, AVYR…MLCV, GFWF…AFYI, FYFG…IDFA, YAGL…ALMF, FISL…AAVL, LLQA…SSIP, QWWD…FISL, TYSY…MTLT, and WTAV…WTLV.

It belongs to the TDE1 family.

The protein resides in the cell membrane. The catalysed reaction is a 1,2-diacyl-sn-glycero-3-phospho-L-serine(in) = a 1,2-diacyl-sn-glycero-3-phospho-L-serine(out). It catalyses the reaction a 1,2-diacyl-sn-glycero-3-phosphocholine(in) = a 1,2-diacyl-sn-glycero-3-phosphocholine(out). The enzyme catalyses a 1,2-diacyl-sn-glycero-3-phosphoethanolamine(in) = a 1,2-diacyl-sn-glycero-3-phosphoethanolamine(out). Non-ATP-dependent, non-specific lipid transporter for phosphatidylserine, phosphatidylcholine, and phosphatidylethanolamine. Functions as a scramblase that flips lipids in both directions across the membrane. In contrast to SERINC3 and SERINC5, has no effect on HIV-1 particles infectivity. In Homo sapiens (Human), this protein is Serine incorporator 2.